The sequence spans 562 residues: Chaperonin GroEL 1 (562 aa).

Residues 30-33 (TLGP), Lys-51, 87-91 (DGTTT), Gly-415, 478-480 (NAA), and Asp-494 each bind ATP.

This sequence belongs to the chaperonin (HSP60) family. In terms of assembly, forms a cylinder of 14 subunits composed of two heptameric rings stacked back-to-back. Interacts with the co-chaperonin GroES.

The protein resides in the cytoplasm. It carries out the reaction ATP + H2O + a folded polypeptide = ADP + phosphate + an unfolded polypeptide.. Together with its co-chaperonin GroES, plays an essential role in assisting protein folding. The GroEL-GroES system forms a nano-cage that allows encapsulation of the non-native substrate proteins and provides a physical environment optimized to promote and accelerate protein folding. The chain is Chaperonin GroEL 1 from Sorangium cellulosum (strain So ce56) (Polyangium cellulosum (strain So ce56)).